Reading from the N-terminus, the 116-residue chain is Large ribosomal subunit protein uL22 (116 aa).

Belongs to the universal ribosomal protein uL22 family. As to quaternary structure, part of the 50S ribosomal subunit.

Its function is as follows. This protein binds specifically to 23S rRNA; its binding is stimulated by other ribosomal proteins, e.g. L4, L17, and L20. It is important during the early stages of 50S assembly. It makes multiple contacts with different domains of the 23S rRNA in the assembled 50S subunit and ribosome. The globular domain of the protein is located near the polypeptide exit tunnel on the outside of the subunit, while an extended beta-hairpin is found that lines the wall of the exit tunnel in the center of the 70S ribosome. The protein is Large ribosomal subunit protein uL22 of Gloeobacter violaceus (strain ATCC 29082 / PCC 7421).